Consider the following 760-residue polypeptide: Endoplasmin homolog (760 aa).

The signal sequence occupies residues 1 to 23 (MRFLLVGFVALLAVSAFIPNVYA). Residues asparagine 95, aspartate 137, asparagine 150, and phenylalanine 187 each contribute to the ATP site. N-linked (GlcNAc...) asparagine glycosylation occurs at asparagine 95. Asparagine 423 carries N-linked (GlcNAc...) asparagine glycosylation. Residues 727–760 (SQDAQVETEQHIEEAEPEPEAAEETTIEEEHSEL) are disordered. The span at 741–760 (AEPEPEAAEETTIEEEHSEL) shows a compositional bias: acidic residues. The Prevents secretion from ER motif lies at 757 to 760 (HSEL).

This sequence belongs to the heat shock protein 90 family.

The protein localises to the endoplasmic reticulum lumen. Its function is as follows. Molecular chaperone that functions in the processing and transport of secreted proteins. The polypeptide is Endoplasmin homolog (Caenorhabditis elegans).